The following is a 141-amino-acid chain: Large ribosomal subunit protein uL16 (141 aa).

It belongs to the universal ribosomal protein uL16 family. As to quaternary structure, part of the 50S ribosomal subunit.

Its function is as follows. Binds 23S rRNA and is also seen to make contacts with the A and possibly P site tRNAs. This is Large ribosomal subunit protein uL16 from Aliarcobacter butzleri (strain RM4018) (Arcobacter butzleri).